Reading from the N-terminus, the 434-residue chain is KH domain-containing protein 3 (434 aa).

An involved in RNA binding region spans residues 1-39; sequence MATLKTFRTLVQLKHKLGKAYEIVGEPRLPKWFHVEYLE. One can recognise a KH; atypical domain in the interval 40 to 118; that stretch reads DPKKMYVEPT…CRMKLMEKEA (79 aa). Phosphothreonine occurs at positions 267 and 279. The tract at residues 334–434 is required for interaction with NUMA1 and regulation of apoptosis in response to DNA damage; that stretch reads VREAATQQTP…RAVWEPFVML (101 aa).

Belongs to the KHDC1 family. Component of the subcortical maternal complex (SCMC), at least composed of NLRP5, KHDC3, OOEP, and TLE6. Within the complex, interacts with NLRP5, KHDC3 and TLE6. The SCMC may facilitate translocation of its components between the nuclear and cytoplasmic compartments. Forms a scaffold complex with OOEP/FLOPED, and interacts with BLM and TRIM25 at DNA replication forks. Interacts with PARP1; the interaction is increased following the formation of DNA double-strand breaks. Interacts (via C-terminus) with NUMA1.

The protein localises to the cytoplasm. It is found in the cell cortex. Its subcellular location is the nucleus. It localises to the mitochondrion. The protein resides in the cytoskeleton. The protein localises to the microtubule organizing center. It is found in the centrosome. Its subcellular location is the chromosome. Component of the subcortical maternal complex (SCMC), a multiprotein complex that plays a key role in early embryonic development. The SCMC complex is a structural constituent of cytoplasmic lattices, which consist in fibrous structures found in the cytoplasm of oocytes and preimplantation embryos. They are required to store maternal proteins critical for embryonic development, such as proteins that control epigenetic reprogramming of the preimplantation embryo, and prevent their degradation or activation. KHDC3 ensures proper spindle assembly by regulating the localization of AURKA via RHOA signaling and of PLK1 via a RHOA-independent process. Required for the localization of MAD2L1 to kinetochores to enable spindle assembly checkpoint function. As part of the OOEP-KHDC3 scaffold, recruits BLM and TRIM25 to DNA replication forks, thereby promoting the ubiquitination of BLM by TRIM25, enhancing BLM retainment at replication forks and therefore promoting stalled replication fork restart. Regulates homologous recombination-mediated DNA repair via recruitment of RAD51 to sites of DNA double-strand breaks, and sustainment of PARP1 activity, which in turn modulates downstream ATM or ATR activation. Activation of ATM or ATR in response to DNA double-strand breaks may be cell-type specific. Its role in DNA double-strand break repair is independent of its role in restarting stalled replication forks. Promotes neural stem cell neurogenesis and neuronal differentiation in the hippocampus. May regulate normal development of learning, memory and anxiety. Capable of binding RNA. This is KH domain-containing protein 3 from Rattus norvegicus (Rat).